The primary structure comprises 99 residues: DNA-binding protein Fis (99 aa).

Residues 75–94 constitute a DNA-binding region (H-T-H motif); the sequence is QTRAANMLGINRGTLRKKLK.

It belongs to the transcriptional regulatory Fis family. Homodimer.

In terms of biological role, activates ribosomal RNA transcription. Plays a direct role in upstream activation of rRNA promoters. The chain is DNA-binding protein Fis from Haemophilus influenzae (strain 86-028NP).